The following is a 204-amino-acid chain: Elongation factor Ts (204 aa).

Residues 80–83 (TDFV) are involved in Mg(2+) ion dislocation from EF-Tu.

The protein belongs to the EF-Ts family.

It is found in the cytoplasm. Functionally, associates with the EF-Tu.GDP complex and induces the exchange of GDP to GTP. It remains bound to the aminoacyl-tRNA.EF-Tu.GTP complex up to the GTP hydrolysis stage on the ribosome. The polypeptide is Elongation factor Ts (Caldicellulosiruptor saccharolyticus (strain ATCC 43494 / DSM 8903 / Tp8T 6331)).